We begin with the raw amino-acid sequence, 438 residues long: Carboxypeptidase A6 (438 aa).

Residues 1 to 30 (MNFLGNPRSHTAAFLPVCWLLLNILKPGHC) form the signal peptide. Residues 31–129 (HSYDNRYAGD…NSLQTQRNRR (99 aa)) constitute a propeptide, activation peptide. Residues N89 and N153 are each glycosylated (N-linked (GlcNAc...) asparagine). One can recognise a Peptidase M14 domain in the interval 138 to 433 (VYHSLEDIQS…LAVKNITMHL (296 aa)). Zn(2+)-binding residues include H197 and E200. Residues 197–200 (HARE), R255, and 272–273 (NR) each bind substrate. A disulfide bridge connects residues C266 and C289. Position 325 (H325) interacts with Zn(2+). 326–327 (AY) is a binding site for substrate. N-linked (GlcNAc...) asparagine glycosylation occurs at N344. Position 377 (Y377) interacts with substrate. E399 acts as the Proton donor/acceptor in catalysis. A glycan (N-linked (GlcNAc...) asparagine) is linked at N428.

This sequence belongs to the peptidase M14 family. Zn(2+) serves as cofactor. In terms of tissue distribution, in brain, highly expressed in the olfactory bulb with lower levels in other regions including cerebral cortex, hippocampus, hypothalamus, striatum and medulla. Within the olfactory bulb, highest levels occur in the mitral and granular layers with lower levels in the internal and external plexiform layers. Moderate levels are found in the epididymis with low levels in colon and spleen. Not detected in adrenal, liver, lung, ovary or testis. At embryonic day 14.5, enriched in eye, ear, osteoblasts, stomach, skin, dorsal root ganglia and throughout the CNS.

The protein localises to the secreted. The protein resides in the extracellular space. It is found in the extracellular matrix. In terms of biological role, may be involved in the proteolytic inactivation of enkephalins and neurotensin in some brain areas. May convert inactive angiotensin I into the biologically active angiotensin II. Releases a C-terminal amino acid, with preference for large hydrophobic C-terminal amino acids and shows only very weak activity toward small amino acids and histidine. The chain is Carboxypeptidase A6 (Cpa6) from Mus musculus (Mouse).